We begin with the raw amino-acid sequence, 182 residues long: ATP-dependent protease subunit HslV (182 aa).

Thr-12 is an active-site residue. Positions 167, 170, and 173 each coordinate Na(+).

Belongs to the peptidase T1B family. HslV subfamily. A double ring-shaped homohexamer of HslV is capped on each side by a ring-shaped HslU homohexamer. The assembly of the HslU/HslV complex is dependent on binding of ATP.

The protein resides in the cytoplasm. The catalysed reaction is ATP-dependent cleavage of peptide bonds with broad specificity.. Its activity is regulated as follows. Allosterically activated by HslU binding. Protease subunit of a proteasome-like degradation complex believed to be a general protein degrading machinery. The chain is ATP-dependent protease subunit HslV from Prosthecochloris aestuarii (strain DSM 271 / SK 413).